The sequence spans 83 residues: Apolipoprotein C-I (83 aa).

The first 26 residues, 1–26 (MRLILSLPVLAVVLAMVLEGPAPAQA), serve as a signal peptide directing secretion.

The protein belongs to the apolipoprotein C1 family.

The protein resides in the secreted. Functionally, inhibitor of lipoprotein binding to the low density lipoprotein (LDL) receptor, LDL receptor-related protein, and very low density lipoprotein (VLDL) receptor. Associates with high density lipoproteins (HDL) and the triacylglycerol-rich lipoproteins in the plasma and makes up about 10% of the protein of the VLDL and 2% of that of HDL. Appears to interfere directly with fatty acid uptake and is also the major plasma inhibitor of cholesteryl ester transfer protein (CETP). Binds free fatty acids and reduces their intracellular esterification. Modulates the interaction of APOE with beta-migrating VLDL and inhibits binding of beta-VLDL to the LDL receptor-related protein. The sequence is that of Apolipoprotein C-I (APOC1) from Eonycteris spelaea (Lesser dawn bat).